The following is an 83-amino-acid chain: Cell division protein ZapB (83 aa).

Residues 7 to 80 (EMLEKLEAKV…RVRTLLGKMD (74 aa)) are a coiled coil.

Belongs to the ZapB family. Homodimer. The ends of the coiled-coil dimer bind to each other, forming polymers. Interacts with FtsZ.

The protein resides in the cytoplasm. Non-essential, abundant cell division factor that is required for proper Z-ring formation. It is recruited early to the divisome by direct interaction with FtsZ, stimulating Z-ring assembly and thereby promoting cell division earlier in the cell cycle. Its recruitment to the Z-ring requires functional FtsA or ZipA. The protein is Cell division protein ZapB of Photobacterium profundum (strain SS9).